The chain runs to 386 residues: Alkanesulfonate monooxygenase (386 aa).

It belongs to the SsuD family.

The catalysed reaction is an alkanesulfonate + FMNH2 + O2 = an aldehyde + FMN + sulfite + H2O + 2 H(+). Functionally, catalyzes the desulfonation of aliphatic sulfonates. In Delftia acidovorans (strain DSM 14801 / SPH-1), this protein is Alkanesulfonate monooxygenase.